Consider the following 340-residue polypeptide: DNA-directed RNA polymerase subunit alpha (340 aa).

Positions Met1–Asp238 are alpha N-terminal domain (alpha-NTD). The tract at residues Ala253–Ala340 is alpha C-terminal domain (alpha-CTD).

It belongs to the RNA polymerase alpha chain family. Homodimer. The RNAP catalytic core consists of 2 alpha, 1 beta, 1 beta' and 1 omega subunit. When a sigma factor is associated with the core the holoenzyme is formed, which can initiate transcription.

It carries out the reaction RNA(n) + a ribonucleoside 5'-triphosphate = RNA(n+1) + diphosphate. DNA-dependent RNA polymerase catalyzes the transcription of DNA into RNA using the four ribonucleoside triphosphates as substrates. The protein is DNA-directed RNA polymerase subunit alpha of Myxococcus xanthus (strain DK1622).